The primary structure comprises 223 residues: Ribosomal RNA small subunit methyltransferase G (223 aa).

Residues G90, L95, V141–E142, and R156 each bind S-adenosyl-L-methionine.

This sequence belongs to the methyltransferase superfamily. RNA methyltransferase RsmG family.

It localises to the cytoplasm. The catalysed reaction is guanosine(527) in 16S rRNA + S-adenosyl-L-methionine = N(7)-methylguanosine(527) in 16S rRNA + S-adenosyl-L-homocysteine. In terms of biological role, specifically methylates the N7 position of guanine in position 527 of 16S rRNA. This chain is Ribosomal RNA small subunit methyltransferase G, found in Ralstonia nicotianae (strain ATCC BAA-1114 / GMI1000) (Ralstonia solanacearum).